The primary structure comprises 535 residues: Bifunctional purine biosynthesis protein PurH (535 aa).

Residues 1–148 (MNNARPIRRA…KNHKDTTIIV (148 aa)) form the MGS-like domain.

Belongs to the PurH family.

It catalyses the reaction (6R)-10-formyltetrahydrofolate + 5-amino-1-(5-phospho-beta-D-ribosyl)imidazole-4-carboxamide = 5-formamido-1-(5-phospho-D-ribosyl)imidazole-4-carboxamide + (6S)-5,6,7,8-tetrahydrofolate. The catalysed reaction is IMP + H2O = 5-formamido-1-(5-phospho-D-ribosyl)imidazole-4-carboxamide. Its pathway is purine metabolism; IMP biosynthesis via de novo pathway; 5-formamido-1-(5-phospho-D-ribosyl)imidazole-4-carboxamide from 5-amino-1-(5-phospho-D-ribosyl)imidazole-4-carboxamide (10-formyl THF route): step 1/1. It participates in purine metabolism; IMP biosynthesis via de novo pathway; IMP from 5-formamido-1-(5-phospho-D-ribosyl)imidazole-4-carboxamide: step 1/1. This Shewanella woodyi (strain ATCC 51908 / MS32) protein is Bifunctional purine biosynthesis protein PurH.